Here is a 401-residue protein sequence, read N- to C-terminus: Arylacetamide deacetylase-like 2 (401 aa).

The N-terminal stretch at Met-1–His-18 is a signal peptide. Residues His-111 to Gly-113 carry the Involved in the stabilization of the negatively charged intermediate by the formation of the oxyanion hole motif. An intrachain disulfide couples Cys-116 to Cys-338. Catalysis depends on residues Ser-189, Asp-341, and His-371.

The protein belongs to the 'GDXG' lipolytic enzyme family.

Its subcellular location is the secreted. In Homo sapiens (Human), this protein is Arylacetamide deacetylase-like 2 (AADACL2).